The chain runs to 483 residues: Protein hedgehog (483 aa).

The N-terminal stretch at 1–19 (MDNQTVAAIWSCASATCLS) is a signal peptide. A propeptide spanning residues 20-92 (LDAKRHSVET…LALNFRHAHS (73 aa)) is cleaved from the precursor. The interval 28-57 (ETNTNDRQAPPGLSNSNNNNNNNKSTAVDA) is disordered. The span at 41 to 50 (SNSNNNNNNN) shows a compositional bias: low complexity. A lipid anchor (N-palmitoyl cysteine) is attached at cysteine 93. Ca(2+) is bound by residues glutamate 157, glutamate 158, aspartate 163, threonine 193, glutamate 194, aspartate 197, and aspartate 199. Glycine 266 carries the Cholesterol glycine ester lipid modification.

This sequence belongs to the hedgehog family. As to quaternary structure, interacts with shf. The C-terminal part of the hedgehog protein precursor displays an autoproteolysis activity that results in the cleavage of the full-length protein into two parts (N-product and C-product). In addition, the C-terminal part displays a cholesterol transferase activity that results by the covalent attachment of a cholesterol moiety to the C-terminal of the newly generated N-product. The N-product is the active species in both local and long-range signaling, whereas the C-product has no signaling activity. In terms of processing, cholesterylation is required for N-product targeting to lipid rafts and multimerization. Post-translationally, N-palmitoylation by Rasp of the hedgehog N-product, within the secretory pathway, is required for the embryonic and larval patterning activities of the hedgehog signal.

It is found in the nucleus. The protein resides in the cytoplasm. It localises to the cell membrane. It catalyses the reaction glycyl-L-cysteinyl-[protein] + cholesterol + H(+) = [protein]-C-terminal glycyl cholesterol ester + N-terminal L-cysteinyl-[protein]. The C-terminal part of the hedgehog protein precursor displays an autoproteolysis activity that results in the cleavage of the full-length protein into two parts (N-product and C-product). In addition, the C-terminal part displays a cholesterol transferase activity that results by the covalent attachment of a cholesterol moiety to the C-terminal of the newly generated N-product. Once cleaved, the C-product has no signaling activity and diffuses from the cell. Functionally, the dually lipidated hedgehog protein N-product is a morphogen which is essential for a variety of patterning events during development. Establishes the anterior-posterior axis of the embryonic segments and patterns the larval imaginal disks. Binds to the patched (ptc) receptor, which functions in association with smoothened (smo), to activate the transcription of target genes wingless (wg), decapentaplegic (dpp) and ptc. In the absence of hh, ptc represses the constitutive signaling activity of smo through fused (fu). Essential component of a signaling pathway which regulates the Duox-dependent gut immune response to bacterial uracil; required to activate Cad99C-dependent endosome formation, norpA-dependent Ca2+ mobilization and p38 MAPK, which are essential steps in the Duox-dependent production of reactive oxygen species (ROS) in response to intestinal bacterial infection. During photoreceptor differentiation, it up-regulates transcription of Ubr3, which in turn promotes the hh-signaling pathway by mediating the ubiquitination and degradation of cos. This Drosophila virilis (Fruit fly) protein is Protein hedgehog.